Here is a 155-residue protein sequence, read N- to C-terminus: Phosphopantetheine adenylyltransferase (155 aa).

This sequence belongs to the eukaryotic CoaD family.

It is found in the cytoplasm. It catalyses the reaction (R)-4'-phosphopantetheine + ATP + H(+) = 3'-dephospho-CoA + diphosphate. Its pathway is cofactor biosynthesis; coenzyme A biosynthesis. Its function is as follows. Reversibly transfers an adenylyl group from ATP to 4'-phosphopantetheine, yielding dephospho-CoA (dPCoA) and pyrophosphate. This chain is Phosphopantetheine adenylyltransferase, found in Pyrobaculum aerophilum (strain ATCC 51768 / DSM 7523 / JCM 9630 / CIP 104966 / NBRC 100827 / IM2).